Consider the following 266-residue polypeptide: Decarboxylase tropJ (266 aa).

Residue Glu-80 is the Proton acceptor of the active site. Residues Glu-80, His-99, His-101, and His-180 each contribute to the Zn(2+) site.

This sequence belongs to the aldolase class II family. Zn(2+) is required as a cofactor.

It functions in the pathway secondary metabolite biosynthesis. Decarboxylase; part of the gene cluster that mediates the biosynthesis of the tropolone class of fungal maleic anhydrides. The pathway begins with the synthesis of 3-methylorcinaldehyde by the non-reducing polyketide synthase (PKS) tropA. 3-methylorcinaldehyde is the substrate for the FAD-dependent monooxygenase tropB to yield a dearomatized hydroxycyclohexadione. The 2-oxoglutarate-dependent dioxygenase tropC then performs the oxidative ring expansion to provide the first tropolone metabolite stipitaldehyde. Trop D converts stipitaldehyde into stipitacetal which is in turn converted to stipitalide by the short-chain dehydrogenase/reductase tropE. The next steps involve tropF, tropG, tropH, tropI and tropJ to form successive tropolone maleic anhydrides including stipitaldehydic, stipitatonic and stipitatic acids. The sequence is that of Decarboxylase tropJ from Talaromyces stipitatus (strain ATCC 10500 / CBS 375.48 / QM 6759 / NRRL 1006) (Penicillium stipitatum).